The sequence spans 152 residues: MADVEPEVAAAGVPKKRTFKKFAFKGVDLDALLDMSTDDLVKLFSSRIRRRFSRGLTRKPMALIKKLRKAKREAPQGEKPEPVRTHLRNMIIVPEMIGSIIGVYNGKTFNQVEIKPEMIGHYLAEFSISYKPVKHGRPGVGATHSSRFIPLK.

The protein belongs to the universal ribosomal protein uS19 family.

Its subcellular location is the cytoplasm. This chain is Small ribosomal subunit protein uS19u (RPS15A), found in Arabidopsis thaliana (Mouse-ear cress).